A 272-amino-acid chain; its full sequence is Phosphate import ATP-binding protein PstB 2 (272 aa).

Positions 26 to 267 (IEINNLCLNY…PIHKQTEDYI (242 aa)) constitute an ABC transporter domain. 58–65 (GPSGCGKS) provides a ligand contact to ATP.

Belongs to the ABC transporter superfamily. Phosphate importer (TC 3.A.1.7) family. As to quaternary structure, the complex is composed of two ATP-binding proteins (PstB), two transmembrane proteins (PstC and PstA) and a solute-binding protein (PstS).

It localises to the cell inner membrane. It carries out the reaction phosphate(out) + ATP + H2O = ADP + 2 phosphate(in) + H(+). Part of the ABC transporter complex PstSACB involved in phosphate import. Responsible for energy coupling to the transport system. The sequence is that of Phosphate import ATP-binding protein PstB 2 from Aliivibrio fischeri (strain ATCC 700601 / ES114) (Vibrio fischeri).